We begin with the raw amino-acid sequence, 239 residues long: Tumor necrosis factor ligand superfamily member 8 (239 aa).

Residues 1–36 (MEPGLQQAGSCGAPSPDPAMQVQPGSVASPWRSTRP) are disordered. The Cytoplasmic portion of the chain corresponds to 1 to 43 (MEPGLQQAGSCGAPSPDPAMQVQPGSVASPWRSTRPWRSTSRS). The helical; Signal-anchor for type II membrane protein transmembrane segment at 44–67 (YFYLSTTALVCLVVAVAIILVLVV) threads the bilayer. Topologically, residues 68–239 (QKKDSTPNTT…LSVFLYSSSD (172 aa)) are extracellular. 6 N-linked (GlcNAc...) asparagine glycosylation sites follow: Asn-75, Asn-86, Asn-114, Asn-158, Asn-194, and Asn-206. In terms of domain architecture, THD spans 103–230 (SWAYLQVSKH…TNTFPLDNVL (128 aa)). Cys-156 and Cys-182 are disulfide-bonded.

This sequence belongs to the tumor necrosis factor family. As to quaternary structure, homotrimer.

Its subcellular location is the membrane. Functionally, cytokine that binds to TNFRSF8/CD30. Induces proliferation of T-cells. The chain is Tumor necrosis factor ligand superfamily member 8 (Tnfsf8) from Mus musculus (Mouse).